A 271-amino-acid polypeptide reads, in one-letter code: MLTIYAVSDSIGETAEQVSKATARQFKERVDVKRVTYIRTFEAVDDFINSIKDPENSMLISTVVLVDIREFLVERCIERGIRIVNVLGPCISTASRVLKTTPTYEPGAVWNMDDRYYKKIEAMEFAMRYDDSKDYNGIKHADVILIGLSRTSKTPLCMYLANKGIKALNVPIMPEIPIPEELFEVDRTKLVGLTIDPIRLIEIRKHRMNKFNQLSSEIQYANGERVLEELEYADKIMRRLRCKIIDVTNRAIEDTALLIMEAIGYNGFRES.

147–154 contributes to the ADP binding site; the sequence is GLSRTSKT.

Belongs to the pyruvate, phosphate/water dikinase regulatory protein family. PDRP subfamily.

It carries out the reaction N(tele)-phospho-L-histidyl/L-threonyl-[pyruvate, phosphate dikinase] + ADP = N(tele)-phospho-L-histidyl/O-phospho-L-threonyl-[pyruvate, phosphate dikinase] + AMP + H(+). The enzyme catalyses N(tele)-phospho-L-histidyl/O-phospho-L-threonyl-[pyruvate, phosphate dikinase] + phosphate + H(+) = N(tele)-phospho-L-histidyl/L-threonyl-[pyruvate, phosphate dikinase] + diphosphate. In terms of biological role, bifunctional serine/threonine kinase and phosphorylase involved in the regulation of the pyruvate, phosphate dikinase (PPDK) by catalyzing its phosphorylation/dephosphorylation. The chain is Putative pyruvate, phosphate dikinase regulatory protein from Clostridium tetani (strain Massachusetts / E88).